We begin with the raw amino-acid sequence, 365 residues long: UDP-N-acetylglucosamine--N-acetylmuramyl-(pentapeptide) pyrophosphoryl-undecaprenol N-acetylglucosamine transferase (365 aa).

UDP-N-acetyl-alpha-D-glucosamine-binding positions include 10–12 (TGG), Asn-128, Arg-170, Ser-199, Ile-250, and Gln-295.

Belongs to the glycosyltransferase 28 family. MurG subfamily.

The protein resides in the cell inner membrane. The catalysed reaction is di-trans,octa-cis-undecaprenyl diphospho-N-acetyl-alpha-D-muramoyl-L-alanyl-D-glutamyl-meso-2,6-diaminopimeloyl-D-alanyl-D-alanine + UDP-N-acetyl-alpha-D-glucosamine = di-trans,octa-cis-undecaprenyl diphospho-[N-acetyl-alpha-D-glucosaminyl-(1-&gt;4)]-N-acetyl-alpha-D-muramoyl-L-alanyl-D-glutamyl-meso-2,6-diaminopimeloyl-D-alanyl-D-alanine + UDP + H(+). It participates in cell wall biogenesis; peptidoglycan biosynthesis. Functionally, cell wall formation. Catalyzes the transfer of a GlcNAc subunit on undecaprenyl-pyrophosphoryl-MurNAc-pentapeptide (lipid intermediate I) to form undecaprenyl-pyrophosphoryl-MurNAc-(pentapeptide)GlcNAc (lipid intermediate II). This chain is UDP-N-acetylglucosamine--N-acetylmuramyl-(pentapeptide) pyrophosphoryl-undecaprenol N-acetylglucosamine transferase, found in Pelodictyon phaeoclathratiforme (strain DSM 5477 / BU-1).